The sequence spans 711 residues: Mitochondrial intermediate peptidase (711 aa).

A mitochondrion-targeting transit peptide spans 1–33 (MLLAAGARYARRLCGRGAAAALQGRTGRSCARD). Residue Lys124 is modified to N6-acetyllysine. His493 contributes to the Zn(2+) binding site. Residue Glu494 is part of the active site. Residues His497 and His500 each coordinate Zn(2+).

This sequence belongs to the peptidase M3 family. Monomer. The cofactor is Zn(2+).

Its subcellular location is the mitochondrion matrix. It carries out the reaction Release of an N-terminal octapeptide as second stage of processing of some proteins imported into the mitochondrion.. Its activity is regulated as follows. Activity is divalent cation-dependent. It is stimulated by manganese, magnesium or calcium ions and reversibly inhibited by zinc, cobalt and iron. Its function is as follows. Cleaves proteins, imported into the mitochondrion, to their mature size. The polypeptide is Mitochondrial intermediate peptidase (Mipep) (Mus musculus (Mouse)).